The primary structure comprises 188 residues: dCTP deaminase (188 aa).

DCTP-binding positions include 111–116 (KSTYAR), 135–137 (TLE), Q156, Y170, and Q180. E137 functions as the Proton donor/acceptor in the catalytic mechanism.

Belongs to the dCTP deaminase family. Homotrimer.

The enzyme catalyses dCTP + H2O + H(+) = dUTP + NH4(+). It participates in pyrimidine metabolism; dUMP biosynthesis; dUMP from dCTP (dUTP route): step 1/2. Functionally, catalyzes the deamination of dCTP to dUTP. The sequence is that of dCTP deaminase from Thiobacillus denitrificans (strain ATCC 25259 / T1).